Reading from the N-terminus, the 277-residue chain is MALFIFLILVGYLMGSINSAIIVCRTFGLPDPREEGSKNPGATNVLRLGGKQYGIMVMVFDALKGILPVILAKFLSAEPVTVAFTALAAVVGHMYPVFFHFRGGKGVATTIGALLAFHFIIGVMVAATWLLVANFWRYSSLASIASISLAPFYSLILVGNLNIFPPLFMITILVLYKHRDNFNRLIDGKEPKIKFKHSVIEEIMEASPATSAEQEFPGKEVIDTNIDETEKTEQAEAVKKPKVKKATTKAKKTTSKEETTKKPKSTKPKTKTVKEKE.

Helical transmembrane passes span 3–23 (LFIFLILVGYLMGSINSAIIV), 55–75 (IMVMVFDALKGILPVILAKFL), 79–99 (PVTVAFTALAAVVGHMYPVFF), 111–131 (IGALLAFHFIIGVMVAATWLL), and 155–175 (LILVGNLNIFPPLFMITILVL). Residues 207 to 277 (SPATSAEQEF…PKTKTVKEKE (71 aa)) form a disordered region. A compositionally biased stretch (basic and acidic residues) spans 216-239 (FPGKEVIDTNIDETEKTEQAEAVK). Composition is skewed to basic residues over residues 240-253 (KPKVKKATTKAKKT) and 262-271 (KPKSTKPKTK).

It belongs to the PlsY family. Probably interacts with PlsX.

It localises to the cell inner membrane. It carries out the reaction an acyl phosphate + sn-glycerol 3-phosphate = a 1-acyl-sn-glycero-3-phosphate + phosphate. Its pathway is lipid metabolism; phospholipid metabolism. Its function is as follows. Catalyzes the transfer of an acyl group from acyl-phosphate (acyl-PO(4)) to glycerol-3-phosphate (G3P) to form lysophosphatidic acid (LPA). This enzyme utilizes acyl-phosphate as fatty acyl donor, but not acyl-CoA or acyl-ACP. In Legionella pneumophila subsp. pneumophila (strain Philadelphia 1 / ATCC 33152 / DSM 7513), this protein is Glycerol-3-phosphate acyltransferase.